A 262-amino-acid polypeptide reads, in one-letter code: Undecaprenyl-diphosphatase (262 aa).

Helical transmembrane passes span 15-35 (LTEW…IILL), 38-58 (SSAA…IVAF), 91-111 (LYIL…AKYV), 114-134 (IFGS…LLYS), 149-169 (ALIV…RSGA), 189-209 (FLLS…VSPA), 219-239 (VGLL…LSII), and 242-262 (GRLH…LSLL).

It belongs to the UppP family.

It is found in the cell membrane. The catalysed reaction is di-trans,octa-cis-undecaprenyl diphosphate + H2O = di-trans,octa-cis-undecaprenyl phosphate + phosphate + H(+). Its function is as follows. Catalyzes the dephosphorylation of undecaprenyl diphosphate (UPP). This Korarchaeum cryptofilum (strain OPF8) protein is Undecaprenyl-diphosphatase.